The sequence spans 531 residues: Peroxinectin A (531 aa).

The signal sequence occupies residues 1 to 21; sequence MRLNLISFFIIFTILVSISNS. A glycan (N-linked (GlcNAc...) asparagine) is linked at N62. Residue H101 is the Proton acceptor of the active site. 2 N-linked (GlcNAc...) asparagine glycosylation sites follow: N131 and N338.

It belongs to the peroxidase family.

It localises to the secreted. The catalysed reaction is 2 a phenolic donor + H2O2 = 2 a phenolic radical donor + 2 H2O. The polypeptide is Peroxinectin A (poxA) (Dictyostelium discoideum (Social amoeba)).